A 102-amino-acid chain; its full sequence is Large ribosomal subunit protein uL24 (102 aa).

Belongs to the universal ribosomal protein uL24 family. In terms of assembly, part of the 50S ribosomal subunit.

Its function is as follows. One of two assembly initiator proteins, it binds directly to the 5'-end of the 23S rRNA, where it nucleates assembly of the 50S subunit. Functionally, one of the proteins that surrounds the polypeptide exit tunnel on the outside of the subunit. The protein is Large ribosomal subunit protein uL24 of Ralstonia pickettii (strain 12J).